The sequence spans 414 residues: Tryptophan synthase beta chain (414 aa).

An N6-(pyridoxal phosphate)lysine modification is found at lysine 108.

It belongs to the TrpB family. As to quaternary structure, tetramer of two alpha and two beta chains. It depends on pyridoxal 5'-phosphate as a cofactor.

The catalysed reaction is (1S,2R)-1-C-(indol-3-yl)glycerol 3-phosphate + L-serine = D-glyceraldehyde 3-phosphate + L-tryptophan + H2O. The protein operates within amino-acid biosynthesis; L-tryptophan biosynthesis; L-tryptophan from chorismate: step 5/5. Its function is as follows. The beta subunit is responsible for the synthesis of L-tryptophan from indole and L-serine. This chain is Tryptophan synthase beta chain, found in Beijerinckia indica subsp. indica (strain ATCC 9039 / DSM 1715 / NCIMB 8712).